Here is a 254-residue protein sequence, read N- to C-terminus: Alcohol dehydrogenase 2 (254 aa).

10-33 (FVAGLGGIGFDTSREIVKRGPKNL) provides a ligand contact to NAD(+). Position 138 (serine 138) interacts with substrate. Tyrosine 151 functions as the Proton acceptor in the catalytic mechanism.

It belongs to the short-chain dehydrogenases/reductases (SDR) family. Homodimer.

The enzyme catalyses a primary alcohol + NAD(+) = an aldehyde + NADH + H(+). The catalysed reaction is a secondary alcohol + NAD(+) = a ketone + NADH + H(+). The chain is Alcohol dehydrogenase 2 (Adh2) from Drosophila mojavensis (Fruit fly).